The sequence spans 455 residues: Histone chaperone RTT106 (455 aa).

Residue Ser-2 is modified to N-acetylserine. The segment at 2–67 (SKLFLDELPE…SSDLLKTDEI (66 aa)) is dimeric region. 2 PH domains span residues 68-200 (SETN…GFKI) and 217-301 (INSF…VKRK). Residues 68-301 (SETNTIFKLE…AKIDDYVKRK (234 aa)) are double PH domain. Positions 305 to 314 (DKSMSEELKA) are enriched in basic and acidic residues. Positions 305–455 (DKSMSEELKA…DEDGSGVEYD (151 aa)) are disordered. Residues 319–339 (KGQATDGTADQPSILQEATRQ) show a composition bias toward polar residues. Composition is skewed to acidic residues over residues 350 to 366 (SDDD…ESDL) and 376 to 395 (DGAE…DEEE). The segment covering 402-418 (ALNRDNSFASINGQPEQ) has biased composition (polar residues). Ser-408 and Ser-411 each carry phosphoserine. Over residues 420 to 429 (LQYKEFKEPL) the composition is skewed to basic and acidic residues. Residues 430–455 (ELEDIPIEIDNDDDEDDEDGSGVEYD) are compositionally biased toward acidic residues. Ser-450 is subject to Phosphoserine.

The protein belongs to the RTT106 family. Homodimers (via the N-terminal domain). Interacts with the SWI/SNF complex. Interacts with the RSC complex. Interacts with the HIR complex. Interacts with the CAF-1 complex. Interacts with RLF2. Interacts with SIR4. Interacts with YTA7. Interacts with CAC2. Interacts with HPC2. Interacts with HIR2. Interacts with MSI1. Interacts with HIR1. Interacts with histone H3. Interacts with histone H4.

It is found in the nucleus. The protein resides in the chromosome. Functionally, histones H3 and H4 chaperone involved in the nucleosome formation and heterochromatin silencing. Required for the deposition of H3K56ac-carrying H3-H4 complex onto newly-replicated DNA. Plays a role in the transcriptional regulation of the cell-cycle dependent histone genes by directly recruiting the SWI/SNF and RSC chromatin remodeling complexes to the histone genes in a cell cycle dependent manner. In cooperation with HIR and ASF1, creates a repressive structure at the core histone gene promoter and contributes to their repression outside of S phase. Involved in regulation of Ty1 transposition. The polypeptide is Histone chaperone RTT106 (Saccharomyces cerevisiae (strain ATCC 204508 / S288c) (Baker's yeast)).